A 343-amino-acid chain; its full sequence is MNGAVCVLSALIAVFTCFSCRPAVQDERAVRIAVFVPGFRHDSPVYAMLCDGVERAVTQERATGRSIGLDIIEAGPNQALWREKLAHLAAEQRYRLIVSSNPALPHVLEPILRQFPLQRFLVLDAYAPQEHSLITFRYNQWEQAYLAGHLSALVSASAMRFANADKKIGLIAGQSYPVMTQTIIPAFLAGARAVDPAFEVDVRVVGNWYDAAKSADLARILFHEGVDVMMPICGGANQGVLAAARELGFYVSWFDDNGYARAPGYVVGSSVMEQERLAYEQTLRCIRGELPSAGAWTLGVKDGYVRFIEEDPLYLQTVPEPIRVRQSALLRRIQSGELTLPVR.

A signal peptide spans 1–19; that stretch reads MNGAVCVLSALIAVFTCFS. The N-palmitoyl cysteine moiety is linked to residue Cys20. A lipid anchor (S-diacylglycerol cysteine) is attached at Cys20. Riboflavin contacts are provided by residues 43–46, Asp124, Gln140, Tyr176, Trp208, and Asp255; that span reads SPVY.

Belongs to the BMP lipoprotein family. As to quaternary structure, monomer in solution. The complex is probably composed of two ATP-binding proteins (RfuB), two transmembrane proteins (RfuC and RfuD) and a solute-binding protein (RfuA).

Its subcellular location is the cell inner membrane. Its function is as follows. Probably part of the ABC transporter complex RfuABCD involved in riboflavin import. Binds riboflavin. This is ABC transporter riboflavin-binding protein RfuA from Treponema pallidum (strain Nichols).